The chain runs to 601 residues: Elongation factor 4 (601 aa).

A tr-type G domain is found at 6 to 188; that stretch reads NYIRNFSIVA…AIVRQLPPPH (183 aa). GTP-binding positions include 18–23 and 135–138; these read DHGKST and NKVD.

Belongs to the TRAFAC class translation factor GTPase superfamily. Classic translation factor GTPase family. LepA subfamily.

Its subcellular location is the cell inner membrane. It carries out the reaction GTP + H2O = GDP + phosphate + H(+). Functionally, required for accurate and efficient protein synthesis under certain stress conditions. May act as a fidelity factor of the translation reaction, by catalyzing a one-codon backward translocation of tRNAs on improperly translocated ribosomes. Back-translocation proceeds from a post-translocation (POST) complex to a pre-translocation (PRE) complex, thus giving elongation factor G a second chance to translocate the tRNAs correctly. Binds to ribosomes in a GTP-dependent manner. The sequence is that of Elongation factor 4 from Bartonella quintana (strain Toulouse) (Rochalimaea quintana).